Reading from the N-terminus, the 443-residue chain is Histidinol dehydrogenase (443 aa).

Tyr127, Gln185, and Asn208 together coordinate NAD(+). 3 residues coordinate substrate: Ser234, Gln256, and His259. Residues Gln256 and His259 each coordinate Zn(2+). Residues Glu323 and His324 each act as proton acceptor in the active site. Residues His324, Asp357, Glu411, and His416 each coordinate substrate. Asp357 provides a ligand contact to Zn(2+). His416 contributes to the Zn(2+) binding site.

Belongs to the histidinol dehydrogenase family. The cofactor is Zn(2+).

It carries out the reaction L-histidinol + 2 NAD(+) + H2O = L-histidine + 2 NADH + 3 H(+). It functions in the pathway amino-acid biosynthesis; L-histidine biosynthesis; L-histidine from 5-phospho-alpha-D-ribose 1-diphosphate: step 9/9. Its function is as follows. Catalyzes the sequential NAD-dependent oxidations of L-histidinol to L-histidinaldehyde and then to L-histidine. The polypeptide is Histidinol dehydrogenase (Photobacterium profundum (strain SS9)).